Reading from the N-terminus, the 899-residue chain is Linoleate 13S-lipoxygenase 2-1, chloroplastic (899 aa).

Residues 1–40 (MLKPQLQQSSQSTKALIPSWNTNPLFLASFPINILNKNFR) constitute a chloroplast transit peptide. One can recognise a PLAT domain in the interval 78-200 (VQKQVNLNLS…DNPDKRIFFT (123 aa)). In terms of domain architecture, Lipoxygenase spans 203-899 (SYLPSQTPSG…GKGVPYSISI (697 aa)). Residues 252 to 287 (SNNDDAKRPVLGGKELPYPRRCKTGRPRSKKDPLSE) form a disordered region. Positions 271–280 (RRCKTGRPRS) are enriched in basic residues. The Fe cation site is built by histidine 557, histidine 562, histidine 749, asparagine 753, and isoleucine 899.

It belongs to the lipoxygenase family. As to quaternary structure, monomer. It depends on Fe cation as a cofactor. Expressed in leaves and floral buds.

The protein localises to the plastid. It localises to the chloroplast stroma. It is found in the chloroplast thylakoid. The enzyme catalyses (9Z,12Z)-octadecadienoate + O2 = (13S)-hydroperoxy-(9Z,11E)-octadecadienoate. The catalysed reaction is (9Z,12Z,15Z)-octadecatrienoate + O2 = (13S)-hydroperoxy-(9Z,11E,15Z)-octadecatrienoate. It participates in lipid metabolism; oxylipin biosynthesis. In terms of biological role, plant lipoxygenase involved in a number of diverse aspects of plant physiology including growth and development, pest resistance, and senescence. May not be involved in the bulk production of jasmonate upon wounding. Catalyzes the hydroperoxidation of lipids containing a cis,cis-1,4-pentadiene structure. Linolenic acid is the preferred substrate, before linoleic and arachidonic acids. Also has some activity with phosphatidylglycerol, but not with galactolipids. This chain is Linoleate 13S-lipoxygenase 2-1, chloroplastic, found in Solanum tuberosum (Potato).